The primary structure comprises 402 residues: Nuclear hormone receptor family member nhr-96 (402 aa).

Residues 4 to 79 (FGLCAVCGQV…VGMDVKKIQQ (76 aa)) constitute a DNA-binding region (nuclear receptor). 2 NR C4-type zinc fingers span residues 7–27 (CAVC…CRSC) and 44–67 (CVKA…LKRC). One can recognise an NR LBD domain in the interval 154–402 (NYYNSLELLT…FSDPEMFELT (249 aa)).

It belongs to the nuclear hormone receptor family.

Its subcellular location is the nucleus. Orphan nuclear receptor. In Caenorhabditis elegans, this protein is Nuclear hormone receptor family member nhr-96 (nhr-96).